We begin with the raw amino-acid sequence, 296 residues long: Probable AP endonuclease (296 aa).

The cysteines at positions 16 and 20 are disulfide-linked. Residues His78, His115, Glu142, His182, His218, Asp231, His233, and Glu271 each coordinate Zn(2+).

It belongs to the AP endonuclease 2 family. Requires Zn(2+) as cofactor.

The protein resides in the host nucleus. Its subcellular location is the host cytoplasm. The protein localises to the virion. In terms of biological role, endonuclease of the viral base excision repair system that catalyzes DNA cleavage reaction at the apurinic or apyrimidinic sites (AP sites). Cleaves phosphodiester bonds on the 5' side of AP sites. In addition to endonuclease activity, the AP endonuclease has a proofreading 3'-5' exonuclease activity that is considerably more efficient in the elimination of a mismatch than in that of a correctly paired base. Displays 3'-phosphatase and 3'-repair diesterase activities. The single nucleotide gaps generated by the AP endonuclease are filled by the viral repair DNA polymerase X and the DNA ligase. The protein is Probable AP endonuclease of Ornithodoros (relapsing fever ticks).